Here is a 308-residue protein sequence, read N- to C-terminus: Glutaminase (308 aa).

Residues Ser-66, Asn-117, Glu-161, Asn-168, Tyr-192, Tyr-244, and Val-262 each contribute to the substrate site.

Belongs to the glutaminase family. Homotetramer.

It carries out the reaction L-glutamine + H2O = L-glutamate + NH4(+). This is Glutaminase from Klebsiella pneumoniae (strain 342).